We begin with the raw amino-acid sequence, 539 residues long: MFQDLHALHTRTSGRRILDLFAADLRRAERFSADLGEMRLDYSKTQIDDAIRAGLIALCDRAQLADKREAMFAGAPINETEGRAVLHTALRNLDGGPVHVDGAEVMADVRLTLARMRRFAEALRSGALPGAGGAITDVVNIGIGGSDLGPAMAVLALAPYHDGPRCHFVSNVDGAHIADTLRGLDPARTLVIVASKTFTTIETMTNARTARDWMQRGGGDPERQFAAVSTATDRTAAFGIPGDRVFGFADWVGGRYSLWGPIGLSLMIAIGPDDFDAFLRGAQEMDRHFQSAPWEKNLPVMLALTGIWHHQICGHPSRAVLPYDQRLARLPAYLQQLEMESNGKSVAMDGTALDQAAGPIVWGEPGTNGQHAFYQLIHQGKQVVPCEFMVAARGHEPDLAHHHRLLIANCLAQSEALMRGRPLDEARAIAAARGVAGDELERQARHRVFAGNRPSTTLIYPRLTPAMLGRIIALYEHRVFVEGVILGINSFDQWGVELGKELATSLGPVVDGTESAAAKDGSTAALVDYVLAHRDTDLT.

The active-site Proton donor is E340. Active-site residues include H371 and K500.

It belongs to the GPI family.

It is found in the cytoplasm. The catalysed reaction is alpha-D-glucose 6-phosphate = beta-D-fructose 6-phosphate. It functions in the pathway carbohydrate biosynthesis; gluconeogenesis. It participates in carbohydrate degradation; glycolysis; D-glyceraldehyde 3-phosphate and glycerone phosphate from D-glucose: step 2/4. Its function is as follows. Catalyzes the reversible isomerization of glucose-6-phosphate to fructose-6-phosphate. This chain is Glucose-6-phosphate isomerase, found in Ruegeria pomeroyi (strain ATCC 700808 / DSM 15171 / DSS-3) (Silicibacter pomeroyi).